A 357-amino-acid polypeptide reads, in one-letter code: UPF0324 membrane protein BMEI1914 (357 aa).

11 helical membrane-spanning segments follow: residues 29–48 (NILPGLGLSVAITAAAMVLE), 58–77 (AWLEALVIAILLGTAVRSLA), 90–112 (SAKLLLEIAVVLLGASISASAVI), 117–136 (GLIFGIAAVVAVAITLSYGI), 149–171 (LVACGNSICGNSAIAAMAPVIGA), 181–203 (AFTAILGVIVVLTLPLLVPLLGL), 210–232 (ILAGLTVYAVPQVLAATAPVSLL), 242–261 (LVRVLMLGPVILVFALISGN), 268–290 (PGFFQLVPWFIIGFLAMMALHSL), 300–322 (AIQYASMLLTIISMAALGLGVDI), and 334–356 (LTAILSLIALCCISLGLIHMLGV).

This sequence belongs to the UPF0324 family.

It localises to the cell membrane. This Brucella melitensis biotype 1 (strain ATCC 23456 / CCUG 17765 / NCTC 10094 / 16M) protein is UPF0324 membrane protein BMEI1914.